Here is a 222-residue protein sequence, read N- to C-terminus: uncharacterized protein (222 aa).

It belongs to the PhoU family.

The protein localises to the cytoplasm. Not known; probably involved in phosphate transport and/or metabolism. This is an uncharacterized protein from Deinococcus radiodurans (strain ATCC 13939 / DSM 20539 / JCM 16871 / CCUG 27074 / LMG 4051 / NBRC 15346 / NCIMB 9279 / VKM B-1422 / R1).